The primary structure comprises 224 residues: Magnesium-protoporphyrin O-methyltransferase (224 aa).

The protein belongs to the class I-like SAM-binding methyltransferase superfamily. Magnesium protoporphyrin O-methyltransferase family.

It catalyses the reaction Mg-protoporphyrin IX + S-adenosyl-L-methionine = Mg-protoporphyrin IX 13-monomethyl ester + S-adenosyl-L-homocysteine. It participates in porphyrin-containing compound metabolism; bacteriochlorophyll biosynthesis (light-independent). Its function is as follows. Converts Mg-protoporphyrin IX to Mg-protoporphyrin IX methylester using S-adenosyl-L-methionine as a cofactor. This Rhodobacter capsulatus (Rhodopseudomonas capsulata) protein is Magnesium-protoporphyrin O-methyltransferase (bchM).